Reading from the N-terminus, the 322-residue chain is tRNA-modifying protein YgfZ (322 aa).

A folate-binding site is contributed by W182.

Belongs to the tRNA-modifying YgfZ family.

It localises to the cytoplasm. Folate-binding protein involved in regulating the level of ATP-DnaA and in the modification of some tRNAs. It is probably a key factor in regulatory networks that act via tRNA modification, such as initiation of chromosomal replication. The protein is tRNA-modifying protein YgfZ of Vibrio parahaemolyticus serotype O3:K6 (strain RIMD 2210633).